The chain runs to 111 residues: Phosphoribosyl-AMP cyclohydrolase (111 aa).

Aspartate 80 serves as a coordination point for Mg(2+). Position 81 (cysteine 81) interacts with Zn(2+). 2 residues coordinate Mg(2+): aspartate 82 and aspartate 84. Residues cysteine 97 and cysteine 104 each contribute to the Zn(2+) site.

This sequence belongs to the PRA-CH family. Homodimer. It depends on Mg(2+) as a cofactor. Zn(2+) is required as a cofactor.

It is found in the cytoplasm. It catalyses the reaction 1-(5-phospho-beta-D-ribosyl)-5'-AMP + H2O = 1-(5-phospho-beta-D-ribosyl)-5-[(5-phospho-beta-D-ribosylamino)methylideneamino]imidazole-4-carboxamide. It participates in amino-acid biosynthesis; L-histidine biosynthesis; L-histidine from 5-phospho-alpha-D-ribose 1-diphosphate: step 3/9. Its function is as follows. Catalyzes the hydrolysis of the adenine ring of phosphoribosyl-AMP. In Mycobacterium ulcerans (strain Agy99), this protein is Phosphoribosyl-AMP cyclohydrolase.